The following is a 319-amino-acid chain: Acetyl-coenzyme A carboxylase carboxyl transferase subunit alpha (319 aa).

The CoA carboxyltransferase C-terminal domain maps to 35-296 (NIDEEVHRLR…KAQLLADLAD (262 aa)).

The protein belongs to the AccA family. As to quaternary structure, acetyl-CoA carboxylase is a heterohexamer composed of biotin carboxyl carrier protein (AccB), biotin carboxylase (AccC) and two subunits each of ACCase subunit alpha (AccA) and ACCase subunit beta (AccD).

It localises to the cytoplasm. The catalysed reaction is N(6)-carboxybiotinyl-L-lysyl-[protein] + acetyl-CoA = N(6)-biotinyl-L-lysyl-[protein] + malonyl-CoA. Its pathway is lipid metabolism; malonyl-CoA biosynthesis; malonyl-CoA from acetyl-CoA: step 1/1. In terms of biological role, component of the acetyl coenzyme A carboxylase (ACC) complex. First, biotin carboxylase catalyzes the carboxylation of biotin on its carrier protein (BCCP) and then the CO(2) group is transferred by the carboxyltransferase to acetyl-CoA to form malonyl-CoA. The chain is Acetyl-coenzyme A carboxylase carboxyl transferase subunit alpha from Shigella boydii serotype 4 (strain Sb227).